The following is a 443-amino-acid chain: Ribosomal protein uS12 methylthiotransferase RimO (443 aa).

Residues 5–115 form the MTTase N-terminal domain; the sequence is PNIGFISLGC…VMKHVHKYVP (111 aa). [4Fe-4S] cluster contacts are provided by cysteine 14, cysteine 50, cysteine 79, cysteine 147, cysteine 151, and cysteine 154. A Radical SAM core domain is found at 133–374; that stretch reads LTPKHYAYLK…MQLQQKISAE (242 aa). A TRAM domain is found at 377 to 443; that stretch reads RQKIGRTLSV…ADEYDLWGEI (67 aa).

It belongs to the methylthiotransferase family. RimO subfamily. It depends on [4Fe-4S] cluster as a cofactor.

Its subcellular location is the cytoplasm. It carries out the reaction L-aspartate(89)-[ribosomal protein uS12]-hydrogen + (sulfur carrier)-SH + AH2 + 2 S-adenosyl-L-methionine = 3-methylsulfanyl-L-aspartate(89)-[ribosomal protein uS12]-hydrogen + (sulfur carrier)-H + 5'-deoxyadenosine + L-methionine + A + S-adenosyl-L-homocysteine + 2 H(+). Its function is as follows. Catalyzes the methylthiolation of an aspartic acid residue of ribosomal protein uS12. This is Ribosomal protein uS12 methylthiotransferase RimO from Histophilus somni (strain 2336) (Haemophilus somnus).